Reading from the N-terminus, the 63-residue chain is Large ribosomal subunit protein uL29 (63 aa).

Belongs to the universal ribosomal protein uL29 family.

The chain is Large ribosomal subunit protein uL29 from Pseudomonas aeruginosa (strain UCBPP-PA14).